Reading from the N-terminus, the 476-residue chain is MAKEQVQAITKMEEDFAQWYTDIVKKAELVDYSSVKGCMILRPYGYALWENMQKVMDEKLKATGHENVYMPMFIPESLLQKEKDHVEGFAPEVAWVTHGGDEKLAERLCVRPTSETLFCEHFSKIVQSYNDLPKLYNQWCSVVRWEKTTRPFLRTTEFLWQEGHTIHETAEESQAETLNILNLYASFCEDYLAIPVIKGQKTEKEKFAGAKATYTIESLMHDGKALQTGTSHNFGTNFSEAFDIKFLDRNGKWQYVHQTSWGVSTRMIGGLIMVHSDNNGLVMPPKVAPVQVVIVPIAQHKEGVLAKAIELQGHIQKVARVKIDASNKTPGWKFNEYEMKGIPIRLEVGPKDIEKNQVVLVRRDTKEKEFISMDQLEERIPALLEEIHNSLFNKAKVFRDENTYSVTSFEEMKKVADEKQGFIKAMWCGEVACEEKLKEEVGVSSRCMPFEQEHLADECVCCGKEAKQMVYWGKAY.

It belongs to the class-II aminoacyl-tRNA synthetase family. ProS type 3 subfamily. As to quaternary structure, homodimer.

The protein localises to the cytoplasm. It carries out the reaction tRNA(Pro) + L-proline + ATP = L-prolyl-tRNA(Pro) + AMP + diphosphate. In terms of biological role, catalyzes the attachment of proline to tRNA(Pro) in a two-step reaction: proline is first activated by ATP to form Pro-AMP and then transferred to the acceptor end of tRNA(Pro). This Bacillus thuringiensis subsp. konkukian (strain 97-27) protein is Proline--tRNA ligase 2.